The sequence spans 125 residues: Small ribosomal subunit protein uS13 (125 aa).

Belongs to the universal ribosomal protein uS13 family. In terms of assembly, part of the 30S ribosomal subunit. Forms a loose heterodimer with protein S19. Forms two bridges to the 50S subunit in the 70S ribosome.

Located at the top of the head of the 30S subunit, it contacts several helices of the 16S rRNA. In the 70S ribosome it contacts the 23S rRNA (bridge B1a) and protein L5 of the 50S subunit (bridge B1b), connecting the 2 subunits; these bridges are implicated in subunit movement. Contacts the tRNAs in the A and P-sites. The protein is Small ribosomal subunit protein uS13 of Gluconacetobacter diazotrophicus (strain ATCC 49037 / DSM 5601 / CCUG 37298 / CIP 103539 / LMG 7603 / PAl5).